Reading from the N-terminus, the 642-residue chain is Threonine--tRNA ligase (642 aa).

The TGS domain maps to 1 to 61; that stretch reads MPVITLPDGS…ETDSTLSIIT (61 aa). Residues 243–534 are catalytic; that stretch reads DHRKIGKQLD…LTEEFAGFFP (292 aa). Zn(2+)-binding residues include Cys-334, His-385, and His-511.

It belongs to the class-II aminoacyl-tRNA synthetase family. As to quaternary structure, homodimer. The cofactor is Zn(2+).

It is found in the cytoplasm. The catalysed reaction is tRNA(Thr) + L-threonine + ATP = L-threonyl-tRNA(Thr) + AMP + diphosphate + H(+). In terms of biological role, catalyzes the attachment of threonine to tRNA(Thr) in a two-step reaction: L-threonine is first activated by ATP to form Thr-AMP and then transferred to the acceptor end of tRNA(Thr). Also edits incorrectly charged L-seryl-tRNA(Thr). This Klebsiella pneumoniae (strain 342) protein is Threonine--tRNA ligase.